The sequence spans 157 residues: Transcription elongation factor GreA (157 aa).

Belongs to the GreA/GreB family.

Necessary for efficient RNA polymerase transcription elongation past template-encoded arresting sites. The arresting sites in DNA have the property of trapping a certain fraction of elongating RNA polymerases that pass through, resulting in locked ternary complexes. Cleavage of the nascent transcript by cleavage factors such as GreA or GreB allows the resumption of elongation from the new 3'terminus. GreA releases sequences of 2 to 3 nucleotides. This is Transcription elongation factor GreA from Phenylobacterium zucineum (strain HLK1).